Reading from the N-terminus, the 215-residue chain is Cytidylate kinase (215 aa).

10–18 (GPAASGKGT) lines the ATP pocket.

The protein belongs to the cytidylate kinase family. Type 1 subfamily.

Its subcellular location is the cytoplasm. It carries out the reaction CMP + ATP = CDP + ADP. It catalyses the reaction dCMP + ATP = dCDP + ADP. This Bartonella henselae (strain ATCC 49882 / DSM 28221 / CCUG 30454 / Houston 1) (Rochalimaea henselae) protein is Cytidylate kinase.